Here is a 335-residue protein sequence, read N- to C-terminus: MNLAKRILQGEQLTKETVLKIYEDTNIDTLDLLNEAYILRKHYFGKKVKLNMILNAKSGICPENCGYCGQSRDIKQKQRYALIPEEQIIDGAKVAHDNHIGTYCIVMSGRGPSDKEVDHISNTVRTIKSQHPQLKICACLGLTNDEQAKKLKSAGVDRYNHNINTSENYHDNVVTTHSYKDRTDTIELMKANNISPCSGVICGMGESNQDIVDMAFALKEMDADSIPINFLHPIKGTKFGSMDDLTPMKCLRIVALFRLINPTKEIRIAGGREVNLRSLQPLALKAANSIFVGDYLITGGQPNQLDYDMINDLGFEIDYDTCENKENKNEVSRAN.

The Radical SAM core domain occupies 43–269 (YFGKKVKLNM…INPTKEIRIA (227 aa)). [4Fe-4S] cluster-binding residues include C61, C65, and C68. Residues C104, C137, C197, and R267 each coordinate [2Fe-2S] cluster.

This sequence belongs to the radical SAM superfamily. Biotin synthase family. Homodimer. [4Fe-4S] cluster is required as a cofactor. The cofactor is [2Fe-2S] cluster.

It catalyses the reaction (4R,5S)-dethiobiotin + (sulfur carrier)-SH + 2 reduced [2Fe-2S]-[ferredoxin] + 2 S-adenosyl-L-methionine = (sulfur carrier)-H + biotin + 2 5'-deoxyadenosine + 2 L-methionine + 2 oxidized [2Fe-2S]-[ferredoxin]. Its pathway is cofactor biosynthesis; biotin biosynthesis; biotin from 7,8-diaminononanoate: step 2/2. Catalyzes the conversion of dethiobiotin (DTB) to biotin by the insertion of a sulfur atom into dethiobiotin via a radical-based mechanism. This chain is Biotin synthase, found in Staphylococcus aureus (strain USA300).